Consider the following 72-residue polypeptide: Translational regulator CsrA (72 aa).

The protein belongs to the CsrA/RsmA family. Homodimer; the beta-strands of each monomer intercalate to form a hydrophobic core, while the alpha-helices form wings that extend away from the core.

It is found in the cytoplasm. In terms of biological role, a translational regulator that binds mRNA to regulate translation initiation and/or mRNA stability. Usually binds in the 5'-UTR at or near the Shine-Dalgarno sequence preventing ribosome-binding, thus repressing translation. Its main target seems to be the major flagellin gene, while its function is anatagonized by FliW. The sequence is that of Translational regulator CsrA from Clostridium botulinum (strain Loch Maree / Type A3).